The sequence spans 707 residues: DNA ligase (707 aa).

Residues 1-23 (MSSKATQDPEAVLAEQSDDATEA) are disordered. NAD(+) contacts are provided by residues 53–57 (DAEFD), 103–104 (SL), and glutamate 133. Catalysis depends on lysine 135, which acts as the N6-AMP-lysine intermediate. NAD(+) contacts are provided by arginine 156, glutamate 196, lysine 315, and lysine 339. Residues cysteine 433, cysteine 436, cysteine 452, and cysteine 458 each contribute to the Zn(2+) site. Positions 622 to 707 (SIERTLDGLS…LENGPDTPDS (86 aa)) constitute a BRCT domain.

Belongs to the NAD-dependent DNA ligase family. LigA subfamily. It depends on Mg(2+) as a cofactor. Requires Mn(2+) as cofactor.

The catalysed reaction is NAD(+) + (deoxyribonucleotide)n-3'-hydroxyl + 5'-phospho-(deoxyribonucleotide)m = (deoxyribonucleotide)n+m + AMP + beta-nicotinamide D-nucleotide.. DNA ligase that catalyzes the formation of phosphodiester linkages between 5'-phosphoryl and 3'-hydroxyl groups in double-stranded DNA using NAD as a coenzyme and as the energy source for the reaction. It is essential for DNA replication and repair of damaged DNA. The chain is DNA ligase from Mycolicibacterium vanbaalenii (strain DSM 7251 / JCM 13017 / BCRC 16820 / KCTC 9966 / NRRL B-24157 / PYR-1) (Mycobacterium vanbaalenii).